A 160-amino-acid polypeptide reads, in one-letter code: Putative pre-16S rRNA nuclease (160 aa).

It belongs to the YqgF nuclease family.

The protein resides in the cytoplasm. Functionally, could be a nuclease involved in processing of the 5'-end of pre-16S rRNA. The sequence is that of Putative pre-16S rRNA nuclease from Rhodopseudomonas palustris (strain BisB5).